The chain runs to 630 residues: Cyclin-T1-2 (630 aa).

The segment covering 288-297 (QSSLSVSSSS) has biased composition (low complexity). 2 disordered regions span residues 288–313 (QSSLSVSSSSPEIGDPNDHLQVDSSQ) and 410–439 (RSGDKTKLCSEGGSSLTDVDSKSTQSVEPP). The segment covering 421-439 (GGSSLTDVDSKSTQSVEPP) has biased composition (polar residues).

This sequence belongs to the cyclin family. Cyclin T subfamily.

This Oryza sativa subsp. japonica (Rice) protein is Cyclin-T1-2 (CYCT1_2).